The sequence spans 229 residues: Urease accessory protein UreF (229 aa).

This sequence belongs to the UreF family. In terms of assembly, ureD, UreF and UreG form a complex that acts as a GTP-hydrolysis-dependent molecular chaperone, activating the urease apoprotein by helping to assemble the nickel containing metallocenter of UreC. The UreE protein probably delivers the nickel.

The protein localises to the cytoplasm. Functionally, required for maturation of urease via the functional incorporation of the urease nickel metallocenter. This chain is Urease accessory protein UreF, found in Staphylococcus aureus (strain USA300).